The following is a 164-amino-acid chain: UPF0114 protein KPN78578_33570 (164 aa).

Helical transmembrane passes span 15-35 (LLAPVYFGLSLGLIALTIKFF), 53-73 (MILTLLSLVDMTLVGGLLVMV), 109-126 (VAASIVAISSIHLLRVFM), and 136-156 (LMWYVIIHLTFVLSAFVMGYL).

Belongs to the UPF0114 family.

The protein resides in the cell membrane. This chain is UPF0114 protein KPN78578_33570, found in Klebsiella pneumoniae subsp. pneumoniae (strain ATCC 700721 / MGH 78578).